A 263-amino-acid chain; its full sequence is MRVAVSGFKGRMGHEVVKTVLREADLELVAVLDHEPKEKNINEIVEFSSLDVPVFGNLSEMLEEIKPDCVVDFTTPKVGYSNTKTILEHGVRAVVGTTGFTPEQISELRSIAESKKIGALIAPNFAVGAVLMMQFAQKAAKYFPNVEIIELHHDNKLDAPSGTAVKTAEMMTETREFVKQGAADEVELIEGARGAEYEGMRIHSVRLPGLVAHQEVIFGAEGQGLTIRHDSYDRISFMSGVALSVRKTKELETLIYGLENILD.

NAD(+)-binding positions include 7-12 (GFKGRM), 96-98 (GTT), and 122-125 (APNF). Histidine 152 functions as the Proton donor/acceptor in the catalytic mechanism. Residue histidine 153 coordinates (S)-2,3,4,5-tetrahydrodipicolinate. The Proton donor role is filled by lysine 156. 162 to 163 (GT) is a (S)-2,3,4,5-tetrahydrodipicolinate binding site.

This sequence belongs to the DapB family.

The protein localises to the cytoplasm. It catalyses the reaction (S)-2,3,4,5-tetrahydrodipicolinate + NAD(+) + H2O = (2S,4S)-4-hydroxy-2,3,4,5-tetrahydrodipicolinate + NADH + H(+). It carries out the reaction (S)-2,3,4,5-tetrahydrodipicolinate + NADP(+) + H2O = (2S,4S)-4-hydroxy-2,3,4,5-tetrahydrodipicolinate + NADPH + H(+). The protein operates within amino-acid biosynthesis; L-lysine biosynthesis via DAP pathway; (S)-tetrahydrodipicolinate from L-aspartate: step 4/4. Functionally, catalyzes the conversion of 4-hydroxy-tetrahydrodipicolinate (HTPA) to tetrahydrodipicolinate. This Listeria monocytogenes serotype 4b (strain CLIP80459) protein is 4-hydroxy-tetrahydrodipicolinate reductase.